The primary structure comprises 325 residues: DNA-directed RNA polymerase subunit alpha (325 aa).

The tract at residues Met-1–Glu-231 is alpha N-terminal domain (alpha-NTD). An alpha C-terminal domain (alpha-CTD) region spans residues Ile-246–Lys-325.

This sequence belongs to the RNA polymerase alpha chain family. As to quaternary structure, homodimer. The RNAP catalytic core consists of 2 alpha, 1 beta, 1 beta' and 1 omega subunit. When a sigma factor is associated with the core the holoenzyme is formed, which can initiate transcription.

It catalyses the reaction RNA(n) + a ribonucleoside 5'-triphosphate = RNA(n+1) + diphosphate. Its function is as follows. DNA-dependent RNA polymerase catalyzes the transcription of DNA into RNA using the four ribonucleoside triphosphates as substrates. In Paraburkholderia phytofirmans (strain DSM 17436 / LMG 22146 / PsJN) (Burkholderia phytofirmans), this protein is DNA-directed RNA polymerase subunit alpha.